A 173-amino-acid chain; its full sequence is Skp-like protein (173 aa).

The signal sequence occupies residues 1 to 19; the sequence is MKKFLLLSLMSLASSTVFA.

This sequence belongs to the Skp family.

This Chlamydia muridarum (strain MoPn / Nigg) protein is Skp-like protein.